The chain runs to 361 residues: MFPASTFHPCPHPYPQATKAGDGWRFGARGCRPAPPSFLPGYRQLMAAEYVDSHQRAQLMALLSRMGPRSVSSRDAAVQVNPRRDASVQCSLGRRTLQPAGCRASPDARSGSCQPRGHAGAGRSPRSWQTVAPFSSVTFCGLSSSLEVAGGRQTPTKGEGSPASSGTREPEPREVAARKAVPQPRSEEGDVQAAGQAGWEQQPPPEDRNSVAAMQSEPGSEEPCPAAEMAQDPGDSDAPRDQASPQSTEQDKERLRFQFLEQKYGYYHCKDCKIRWESAYVWCVQGTSKVYFKQFCRVCEKSYNPYRVEDITCQSCKRTRCACPVRLRHVDPKRPHRQDLCGRCKDKRLSCDSTFSFKYII.

Disordered stretches follow at residues 1–23 (MFPA…AGDG), 98–128 (QPAG…PRSW), and 148–252 (VAGG…EQDK). The residue at position 154 (T154) is a Phosphothreonine; by CDK1. S161 is subject to Phosphoserine; by CDK1. The span at 168–177 (REPEPREVAA) shows a compositional bias: basic and acidic residues. A 3CxxC-type zinc finger spans residues 263–346 (KYGYYHCKDC…RQDLCGRCKD (84 aa)).

It belongs to the ZAR1 family. Interacts with YBX2. Post-translationally, phosphorylation by CDK1 does not regulate formation of MARDO (mitochondria-associated ribonucleoprotein domain) membraneless compartment. Ubiquitinated and degradaded by the proteasome during oocyte meiotic maturation, leading to MARDO (mitochondria-associated ribonucleoprotein domain) membraneless compartment dissolution. As to expression, ovary. Expressed in primary oocytes (from primary through antral follicle stages) and during the progression from Meiosis I to Meiosis II. The mRNA is detected in growing oocytes (early primary follicle, type 3a) through fully grown oocytes (antral follicle, type 8).

The protein resides in the cytoplasm. The protein localises to the cytoplasmic ribonucleoprotein granule. Functionally, mRNA-binding protein that mediates formation of MARDO (mitochondria-associated ribonucleoprotein domain), a membraneless compartment that stores maternal mRNAs in oocytes. MARDO assembly around mitochondria is directed by an increase in mitochondrial membrane potential during oocyte growth. Promotes formation of MARDO phase-separated membraneless compartment by undergoing liquid-liquid phase separation upon binding to maternal mRNAs. Binds to the 3'-UTR of maternal mRNAs. Maternal mRNAs stored in the MARDO are translationally repressed. Essential for female fertility and oocyte-to-embryo transition by coordinating maternal mRNA storage, translation and degradation. The sequence is that of Zygote arrest protein 1 from Mus musculus (Mouse).